The chain runs to 204 residues: Pyridoxal 5'-phosphate synthase subunit PdxT (204 aa).

52–54 serves as a coordination point for L-glutamine; that stretch reads GES. The active-site Nucleophile is the Cys84. L-glutamine is bound by residues Arg116 and 143-144; that span reads IR. Active-site charge relay system residues include His184 and Glu186.

The protein belongs to the glutaminase PdxT/SNO family. In terms of assembly, in the presence of PdxS, forms a dodecamer of heterodimers. Only shows activity in the heterodimer.

It carries out the reaction aldehydo-D-ribose 5-phosphate + D-glyceraldehyde 3-phosphate + L-glutamine = pyridoxal 5'-phosphate + L-glutamate + phosphate + 3 H2O + H(+). It catalyses the reaction L-glutamine + H2O = L-glutamate + NH4(+). It functions in the pathway cofactor biosynthesis; pyridoxal 5'-phosphate biosynthesis. Its function is as follows. Catalyzes the hydrolysis of glutamine to glutamate and ammonia as part of the biosynthesis of pyridoxal 5'-phosphate. The resulting ammonia molecule is channeled to the active site of PdxS. This chain is Pyridoxal 5'-phosphate synthase subunit PdxT, found in Pyrobaculum aerophilum (strain ATCC 51768 / DSM 7523 / JCM 9630 / CIP 104966 / NBRC 100827 / IM2).